A 322-amino-acid polypeptide reads, in one-letter code: N-acetyl-gamma-glutamyl-phosphate reductase (322 aa).

C117 is an active-site residue.

This sequence belongs to the NAGSA dehydrogenase family. Type 2 subfamily.

The protein localises to the cytoplasm. It carries out the reaction N-acetyl-L-glutamate 5-semialdehyde + phosphate + NADP(+) = N-acetyl-L-glutamyl 5-phosphate + NADPH + H(+). The protein operates within amino-acid biosynthesis; L-arginine biosynthesis; N(2)-acetyl-L-ornithine from L-glutamate: step 3/4. In terms of biological role, catalyzes the NADPH-dependent reduction of N-acetyl-5-glutamyl phosphate to yield N-acetyl-L-glutamate 5-semialdehyde. This chain is N-acetyl-gamma-glutamyl-phosphate reductase, found in Trichormus variabilis (strain ATCC 29413 / PCC 7937) (Anabaena variabilis).